We begin with the raw amino-acid sequence, 429 residues long: MKNTYNLRSIAAKAISQVLDQGQSLSAVLPELQKNISDKDRALLQELCFGTLRVLPQLEWCIQQLMARPMTGKQRVFHYLIMVGLYQLIYTRIPPHAALAETVEGATVLKRPQLKGLINGVLRQFQRQQVELLERAVNNDSHYLHPSWLLARIKQAYPAQWQQILDANNQRPPMWLRVNRLHHSRSEYLELLTQADINAEPHPIYRDAVRLITPCAVNHLPGFELGWVTVQDASAQGCVDLLDPQNGEQILDLCAAPGGKTTHILEAAPKAHVLAVDIDEQRLSRVKENLQRLQLQAVVRVGDGRAPDTWCGDQQFDRILLDAPCSATGVIRRHPDIKWLRRDRDISELAQLQSEIIEAIWPKLKHGGVLVYATCSILPEENQQQIAAFLQRHPEAQLTETGTTAAPGKQNLPHPEDGDGFFYAKIIKK.

S-adenosyl-L-methionine is bound by residues 254 to 260 (CAAPGGK), Asp277, Asp303, and Asp322. Residue Cys375 is the Nucleophile of the active site.

The protein belongs to the class I-like SAM-binding methyltransferase superfamily. RsmB/NOP family.

Its subcellular location is the cytoplasm. It carries out the reaction cytidine(967) in 16S rRNA + S-adenosyl-L-methionine = 5-methylcytidine(967) in 16S rRNA + S-adenosyl-L-homocysteine + H(+). In terms of biological role, specifically methylates the cytosine at position 967 (m5C967) of 16S rRNA. The polypeptide is Ribosomal RNA small subunit methyltransferase B (Yersinia pseudotuberculosis serotype O:1b (strain IP 31758)).